Reading from the N-terminus, the 445-residue chain is 3-phosphoshikimate 1-carboxyvinyltransferase (445 aa).

The disordered stretch occupies residues 1 to 25; sequence MTDSNQPMPLQARKSGALHGTARVP. 3-phosphoshikimate contacts are provided by Lys-28, Ser-29, and Arg-33. Lys-28 contacts phosphoenolpyruvate. Residues Gly-101 and Arg-129 each coordinate phosphoenolpyruvate. The 3-phosphoshikimate site is built by Ser-175, Gln-177, Asp-328, and Lys-355. A phosphoenolpyruvate-binding site is contributed by Gln-177. Asp-328 serves as the catalytic Proton acceptor. Arg-359 and Arg-402 together coordinate phosphoenolpyruvate.

Belongs to the EPSP synthase family. As to quaternary structure, monomer.

Its subcellular location is the cytoplasm. It catalyses the reaction 3-phosphoshikimate + phosphoenolpyruvate = 5-O-(1-carboxyvinyl)-3-phosphoshikimate + phosphate. The protein operates within metabolic intermediate biosynthesis; chorismate biosynthesis; chorismate from D-erythrose 4-phosphate and phosphoenolpyruvate: step 6/7. Its function is as follows. Catalyzes the transfer of the enolpyruvyl moiety of phosphoenolpyruvate (PEP) to the 5-hydroxyl of shikimate-3-phosphate (S3P) to produce enolpyruvyl shikimate-3-phosphate and inorganic phosphate. The sequence is that of 3-phosphoshikimate 1-carboxyvinyltransferase from Rhodopseudomonas palustris (strain ATCC BAA-98 / CGA009).